The sequence spans 285 residues: Golgi phosphoprotein 3-like (285 aa).

Residues 1–43 (MTTLTHRTRRTEVSKSSEKKIESEEDTNQERSPDNEDPGDSKD) are disordered. Positions 10–43 (RTEVSKSSEKKIESEEDTNQERSPDNEDPGDSKD) are enriched in basic and acidic residues. A 1,2-diacyl-sn-glycero-3-phospho-(1D-myo-inositol 4-phosphate) contacts are provided by tryptophan 67 and arginine 76. Serine 112 carries the phosphoserine modification. 2 residues coordinate a 1,2-diacyl-sn-glycero-3-phospho-(1D-myo-inositol 4-phosphate): arginine 157 and arginine 160. Residues 176-187 (EKQNFLLFDMTT) are beta-hairpin required for oligomerization.

Belongs to the GOLPH3/VPS74 family. Homooligomer. Does not interact MYO18; differs from GOLPH3 by its inability to interact with MYO18. May interact with ARF1. Expressed in a subset of tissues tested with higher expression in salivary gland, small intestine and skin (at protein level).

The protein localises to the golgi apparatus. It is found in the golgi stack membrane. The protein resides in the trans-Golgi network membrane. In terms of biological role, phosphatidylinositol-4-phosphate-binding protein that may antagonize the action of GOLPH3 which is required for the process of vesicle budding at the Golgi and anterograde transport to the plasma membrane. The chain is Golgi phosphoprotein 3-like (Golph3l) from Mus musculus (Mouse).